A 233-amino-acid polypeptide reads, in one-letter code: 5'-methylthioadenosine/S-adenosylhomocysteine nucleosidase (233 aa).

Catalysis depends on Glu-12, which acts as the Proton acceptor. Substrate is bound by residues Gly-78, Ile-153, and 174–175 (ME). Asp-198 acts as the Proton donor in catalysis.

The protein belongs to the PNP/UDP phosphorylase family. MtnN subfamily.

The enzyme catalyses S-adenosyl-L-homocysteine + H2O = S-(5-deoxy-D-ribos-5-yl)-L-homocysteine + adenine. The catalysed reaction is S-methyl-5'-thioadenosine + H2O = 5-(methylsulfanyl)-D-ribose + adenine. It carries out the reaction 5'-deoxyadenosine + H2O = 5-deoxy-D-ribose + adenine. Its pathway is amino-acid biosynthesis; L-methionine biosynthesis via salvage pathway; S-methyl-5-thio-alpha-D-ribose 1-phosphate from S-methyl-5'-thioadenosine (hydrolase route): step 1/2. Catalyzes the irreversible cleavage of the glycosidic bond in both 5'-methylthioadenosine (MTA) and S-adenosylhomocysteine (SAH/AdoHcy) to adenine and the corresponding thioribose, 5'-methylthioribose and S-ribosylhomocysteine, respectively. Also cleaves 5'-deoxyadenosine, a toxic by-product of radical S-adenosylmethionine (SAM) enzymes, into 5-deoxyribose and adenine. This is 5'-methylthioadenosine/S-adenosylhomocysteine nucleosidase from Exiguobacterium sp. (strain ATCC BAA-1283 / AT1b).